Reading from the N-terminus, the 543-residue chain is CTP synthase (543 aa).

An amidoligase domain region spans residues 1–265 (MARYIFITGG…DDEVLAAFGI (265 aa)). Serine 13 contributes to the CTP binding site. Serine 13 contributes to the UTP binding site. Residue 14–19 (SLGKGL) participates in ATP binding. Residue tyrosine 54 participates in L-glutamine binding. Residue aspartate 71 coordinates ATP. Aspartate 71 and glutamate 139 together coordinate Mg(2+). Residues 146-148 (DIE), 186-191 (KTKPTQ), and lysine 222 contribute to the CTP site. UTP-binding positions include 186–191 (KTKPTQ) and lysine 222. 238-240 (RDA) lines the ATP pocket. The region spanning 291–542 (TIAIVGKYTG…IQAAVVQSRL (252 aa)) is the Glutamine amidotransferase type-1 domain. Glycine 353 lines the L-glutamine pocket. Cysteine 380 (nucleophile; for glutamine hydrolysis) is an active-site residue. L-glutamine-binding positions include 381–384 (FGMQ), glutamate 404, and arginine 470. Active-site residues include histidine 515 and glutamate 517.

Belongs to the CTP synthase family. As to quaternary structure, homotetramer.

The enzyme catalyses UTP + L-glutamine + ATP + H2O = CTP + L-glutamate + ADP + phosphate + 2 H(+). It catalyses the reaction L-glutamine + H2O = L-glutamate + NH4(+). The catalysed reaction is UTP + NH4(+) + ATP = CTP + ADP + phosphate + 2 H(+). The protein operates within pyrimidine metabolism; CTP biosynthesis via de novo pathway; CTP from UDP: step 2/2. Its activity is regulated as follows. Allosterically activated by GTP, when glutamine is the substrate; GTP has no effect on the reaction when ammonia is the substrate. The allosteric effector GTP functions by stabilizing the protein conformation that binds the tetrahedral intermediate(s) formed during glutamine hydrolysis. Inhibited by the product CTP, via allosteric rather than competitive inhibition. Functionally, catalyzes the ATP-dependent amination of UTP to CTP with either L-glutamine or ammonia as the source of nitrogen. Regulates intracellular CTP levels through interactions with the four ribonucleotide triphosphates. The polypeptide is CTP synthase (Nitrobacter winogradskyi (strain ATCC 25391 / DSM 10237 / CIP 104748 / NCIMB 11846 / Nb-255)).